The primary structure comprises 235 residues: Glycerol-3-phosphate acyltransferase (235 aa).

A run of 6 helical transmembrane segments spans residues 4–24 (LLAI…IMAG), 56–76 (SVTL…VAFF), 94–114 (LLAG…GFKG), 125–145 (LIGI…LTVW), 152–172 (VASI…KYVF), and 191–211 (FHDS…LAIL).

The protein belongs to the PlsY family. In terms of assembly, probably interacts with PlsX.

Its subcellular location is the cell inner membrane. The catalysed reaction is an acyl phosphate + sn-glycerol 3-phosphate = a 1-acyl-sn-glycero-3-phosphate + phosphate. It functions in the pathway lipid metabolism; phospholipid metabolism. Functionally, catalyzes the transfer of an acyl group from acyl-phosphate (acyl-PO(4)) to glycerol-3-phosphate (G3P) to form lysophosphatidic acid (LPA). This enzyme utilizes acyl-phosphate as fatty acyl donor, but not acyl-CoA or acyl-ACP. The chain is Glycerol-3-phosphate acyltransferase from Chlorobium luteolum (strain DSM 273 / BCRC 81028 / 2530) (Pelodictyon luteolum).